Here is a 142-residue protein sequence, read N- to C-terminus: HTH-type transcriptional regulator MntR (142 aa).

Residues 1–63 (MPTPSMEDYI…YEKYRGLVLT (63 aa)) enclose the HTH dtxR-type domain. Mn(2+) is bound by residues aspartate 8, glutamate 11, histidine 77, glutamate 99, glutamate 102, and histidine 103.

This sequence belongs to the DtxR/MntR family. As to quaternary structure, homodimer.

The protein localises to the cytoplasm. Its activity is regulated as follows. DNA binding is strongly activated by Mn(2+). In terms of biological role, central regulator of manganese homeostasis. The protein is HTH-type transcriptional regulator MntR of Bacillus cereus (strain G9842).